Consider the following 913-residue polypeptide: Alanine--tRNA ligase (913 aa).

Zn(2+) is bound by residues H608, H612, C711, and H715.

This sequence belongs to the class-II aminoacyl-tRNA synthetase family. Zn(2+) serves as cofactor.

Its subcellular location is the cytoplasm. It catalyses the reaction tRNA(Ala) + L-alanine + ATP = L-alanyl-tRNA(Ala) + AMP + diphosphate. Functionally, catalyzes the attachment of alanine to tRNA(Ala) in a two-step reaction: alanine is first activated by ATP to form Ala-AMP and then transferred to the acceptor end of tRNA(Ala). Also edits incorrectly charged Ser-tRNA(Ala) and Gly-tRNA(Ala) via its editing domain. The protein is Alanine--tRNA ligase of Methanocorpusculum labreanum (strain ATCC 43576 / DSM 4855 / Z).